The sequence spans 191 residues: Potassium-transporting ATPase KdpC subunit (191 aa).

The helical transmembrane segment at 6–26 threads the bilayer; sequence PALVLFILLTLLTGGVYPLLT.

Belongs to the KdpC family. As to quaternary structure, the system is composed of three essential subunits: KdpA, KdpB and KdpC.

It is found in the cell inner membrane. Its function is as follows. Part of the high-affinity ATP-driven potassium transport (or Kdp) system, which catalyzes the hydrolysis of ATP coupled with the electrogenic transport of potassium into the cytoplasm. This subunit acts as a catalytic chaperone that increases the ATP-binding affinity of the ATP-hydrolyzing subunit KdpB by the formation of a transient KdpB/KdpC/ATP ternary complex. The chain is Potassium-transporting ATPase KdpC subunit from Klebsiella pneumoniae subsp. pneumoniae (strain ATCC 700721 / MGH 78578).